The following is a 138-amino-acid chain: Peptide methionine sulfoxide reductase MsrB (138 aa).

The MsrB domain occupies 15-137 (EAEWRAQLDP…NSASLGFEPR (123 aa)). Residues cysteine 54, cysteine 57, cysteine 103, and cysteine 106 each contribute to the Zn(2+) site. Cysteine 126 serves as the catalytic Nucleophile.

The protein belongs to the MsrB Met sulfoxide reductase family. The cofactor is Zn(2+).

The enzyme catalyses L-methionyl-[protein] + [thioredoxin]-disulfide + H2O = L-methionyl-(R)-S-oxide-[protein] + [thioredoxin]-dithiol. This is Peptide methionine sulfoxide reductase MsrB from Methylibium petroleiphilum (strain ATCC BAA-1232 / LMG 22953 / PM1).